A 539-amino-acid chain; its full sequence is Chaperonin GroEL (539 aa).

Residues 29–32 (TLGP), 86–90 (DGTTT), G413, 476–478 (NAA), and D492 each bind ATP.

This sequence belongs to the chaperonin (HSP60) family. Forms a cylinder of 14 subunits composed of two heptameric rings stacked back-to-back. Interacts with the co-chaperonin GroES.

The protein localises to the cytoplasm. It catalyses the reaction ATP + H2O + a folded polypeptide = ADP + phosphate + an unfolded polypeptide.. Together with its co-chaperonin GroES, plays an essential role in assisting protein folding. The GroEL-GroES system forms a nano-cage that allows encapsulation of the non-native substrate proteins and provides a physical environment optimized to promote and accelerate protein folding. In Streptococcus thermophilus (strain CNRZ 1066), this protein is Chaperonin GroEL.